Reading from the N-terminus, the 2224-residue chain is Protein sidekick (2224 aa).

A signal peptide spans 1–47; that stretch reads MLKSAASSLRRRRPKTTITATLAIEMPSQPKLASLLAVLVLLCYCDS. Residues 48 to 2001 are Extracellular-facing; it reads CFFCYADANL…LQHKPFYRQT (1954 aa). One can recognise an Ig-like C2-type 1 domain in the interval 72–155; it reads PRFTTHPSSS…SIFSEKSDVV (84 aa). The cysteines at positions 95 and 138 are disulfide-linked. N-linked (GlcNAc...) asparagine glycosylation is found at asparagine 164, asparagine 250, asparagine 318, and asparagine 327. 4 Ig-like C2-type domains span residues 261–355, 359–445, 455–541, and 546–636; these read PEII…ARLQ, PPLF…NSAS, PIME…AYLS, and TQII…ARLS. 2 disulfide bridges follow: cysteine 283–cysteine 336 and cysteine 382–cysteine 433. 3 N-linked (GlcNAc...) asparagine glycosylation sites follow: asparagine 463, asparagine 485, and asparagine 491. Cystine bridges form between cysteine 476-cysteine 525 and cysteine 567-cysteine 620. N-linked (GlcNAc...) asparagine glycans are attached at residues asparagine 628, asparagine 661, asparagine 707, asparagine 809, asparagine 870, asparagine 942, asparagine 1019, asparagine 1094, asparagine 1109, asparagine 1172, asparagine 1203, asparagine 1282, asparagine 1329, asparagine 1379, asparagine 1414, and asparagine 1420. Fibronectin type-III domains lie at 643–753, 758–855, 860–967, 971–1065, 1069–1164, 1169–1270, 1275–1372, 1376–1469, 1474–1570, 1575–1677, 1682–1785, 1789–1883, and 1885–1984; these read PPSN…LPQE, PPVG…TKEG, PPTN…TMDD, EVTG…VEPV, APTA…TIQA, PPFN…TREA, GPLD…TFED, VPSN…TNNR, APSV…TLPA, GVGG…VGEA, EPRA…TLPG, APLH…GPQD, and SPVA…TPSK. Asparagine 1843 and asparagine 1876 each carry an N-linked (GlcNAc...) asparagine glycan. Residues 2002 to 2022 form a helical membrane-spanning segment; sequence WFMVSLAATSIVIIVMVIAVL. Topologically, residues 2023-2224 are cytoplasmic; that stretch reads CVKSKSYKYK…APLPGFSSFV (202 aa). 2 disordered regions span residues 2068-2157 and 2171-2195; these read TLNS…RSDP and LRQS…PEGS. Serine 2071 is modified (phosphoserine). Low complexity predominate over residues 2073–2085; sequence GTLRSGTLGTLGR. Threonine 2074 carries the post-translational modification Phosphothreonine. 2 stretches are compositionally biased toward basic and acidic residues: residues 2112–2122 and 2144–2157; these read HSDEESLKCYD and QHSE…RSDP. Serine 2113 and serine 2117 each carry phosphoserine.

Belongs to the sidekick family.

The protein resides in the membrane. Its function is as follows. Participates in homotypic or heterotypic interactions in the eye during pattern formation to prevent extra cells from joining the precluster and differentiating as photoreceptor cells. This Drosophila melanogaster (Fruit fly) protein is Protein sidekick.